A 702-amino-acid polypeptide reads, in one-letter code: Cytolytic toxin-alpha (702 aa).

The segment at 2 to 265 (SSDIIMAGLG…KADLLVRDIS (264 aa)) is structural MACPF/CDC pore-forming domain. 5 N-linked (GlcNAc...) asparagine glycosylation sites follow: Asn93, Asn100, Asn201, Asn287, and Asn311. Residues 266 to 385 (QGLVRKVHSI…DIIEETKHKA (120 aa)) form a structural FAT domain region. Residues 386–513 (VLSQSQMVKD…PIISAVEKIV (128 aa)) form a thioredoxin (THX) domain region. Residues 505–702 (IISAVEKIVD…RPYHGTVRLL (198 aa)) form the B30.2/SPRY domain. Asn530 carries N-linked (GlcNAc...) asparagine glycosylation.

The protein belongs to the SNTX/VTX toxin family. In terms of assembly, heterodimer of alpha and beta subunits; non-covalently linked. Also associates into tetramers or even higher aggregates. Intrachain disulfide bonds may be present in the heterodimer. In terms of tissue distribution, expressed by the venom gland.

The protein localises to the secreted. Its function is as follows. This heterodimer induces potent hemolytic activities (when tested on rabbit erythrocytes, EC(50)=25-56 ng/mL) due to its ability to form pores in the cell membrane. The pore may be composed of 10 alpha/beta heterodimers. The toxin shows cardiovascular effects that include a vasorelaxant action that may involve the L-arginine-nitric oxid synthase pathway. In addition, it displays edema-inducing activities, increases vascular permeability. It also shows myotoxic activities and interferes irreversibly with neuromuscular function. It also induces irreversible platelet aggregation in rabbit or rat (but not in human or mouse) whole blood. In addition, it has been observed to increase spontaneous quantal acetylcholine release from isolated frog cutaneous pectoris motor endings. This chain is Cytolytic toxin-alpha, found in Scorpaena plumieri (Spotted scorpionfish).